We begin with the raw amino-acid sequence, 74 residues long: MDLSVKSEANVEYMVEAIKEKLRMVNAGAMRAASFNEEMYEDLRDIYEHVMKRETFSISEMQAITEELGTLIKK.

It belongs to the UPF0435 family.

This chain is UPF0435 protein BcerKBAB4_0386, found in Bacillus mycoides (strain KBAB4) (Bacillus weihenstephanensis).